Here is a 298-residue protein sequence, read N- to C-terminus: 4-hydroxy-tetrahydrodipicolinate synthase (298 aa).

Thr51 contributes to the pyruvate binding site. Catalysis depends on Tyr139, which acts as the Proton donor/acceptor. Residue Lys167 is the Schiff-base intermediate with substrate of the active site. Ile209 serves as a coordination point for pyruvate.

Belongs to the DapA family. As to quaternary structure, homotetramer; dimer of dimers.

Its subcellular location is the cytoplasm. The enzyme catalyses L-aspartate 4-semialdehyde + pyruvate = (2S,4S)-4-hydroxy-2,3,4,5-tetrahydrodipicolinate + H2O + H(+). The protein operates within amino-acid biosynthesis; L-lysine biosynthesis via DAP pathway; (S)-tetrahydrodipicolinate from L-aspartate: step 3/4. Its function is as follows. Catalyzes the condensation of (S)-aspartate-beta-semialdehyde [(S)-ASA] and pyruvate to 4-hydroxy-tetrahydrodipicolinate (HTPA). The protein is 4-hydroxy-tetrahydrodipicolinate synthase of Haemophilus influenzae (strain PittGG).